A 263-amino-acid chain; its full sequence is 5'-nucleotidase SurE (263 aa).

A divalent metal cation is bound by residues D8, D9, S43, and N96.

This sequence belongs to the SurE nucleotidase family. The cofactor is a divalent metal cation.

It is found in the cytoplasm. It carries out the reaction a ribonucleoside 5'-phosphate + H2O = a ribonucleoside + phosphate. Nucleotidase that shows phosphatase activity on nucleoside 5'-monophosphates. The chain is 5'-nucleotidase SurE from Jannaschia sp. (strain CCS1).